Consider the following 371-residue polypeptide: tRNA-specific 2-thiouridylase MnmA (371 aa).

Residues 14–21 and M40 each bind ATP; that span reads GMSGGVDS. Positions 100 to 102 are interaction with target base in tRNA; sequence NPD. The Nucleophile role is filled by C105. C105 and C205 are disulfide-bonded. ATP is bound at residue G129. The interval 155 to 157 is interaction with tRNA; sequence KDQ. The active-site Cysteine persulfide intermediate is C205. Residues 321 to 322 form an interaction with tRNA region; that stretch reads RY.

It belongs to the MnmA/TRMU family.

The protein resides in the cytoplasm. The catalysed reaction is S-sulfanyl-L-cysteinyl-[protein] + uridine(34) in tRNA + AH2 + ATP = 2-thiouridine(34) in tRNA + L-cysteinyl-[protein] + A + AMP + diphosphate + H(+). Functionally, catalyzes the 2-thiolation of uridine at the wobble position (U34) of tRNA, leading to the formation of s(2)U34. This is tRNA-specific 2-thiouridylase MnmA from Bordetella pertussis (strain Tohama I / ATCC BAA-589 / NCTC 13251).